The following is a 296-amino-acid chain: Testis-expressed protein 26 (296 aa).

Mn stretches follow at residues A30–G42, E69–K83, I140–S153, D175–P189, and Q229–F243.

This Mus musculus (Mouse) protein is Testis-expressed protein 26 (Tex26).